Reading from the N-terminus, the 70-residue chain is MFCHVDVKISSKRYTWTKLPLNVPKLVLIYLQSHFVLFFFSMCQSIWERPAIGRATTSSASWMVGYDCLL.

Residues 1 to 20 (MFCHVDVKISSKRYTWTKLP) are Cytoplasmic-facing. Residues 21–43 (LNVPKLVLIYLQSHFVLFFFSMC) form a helical membrane-spanning segment. Over 44–70 (QSIWERPAIGRATTSSASWMVGYDCLL) the chain is Extracellular.

In terms of tissue distribution, highly expressed in B-cell lymphoma and lung cancer.

The protein localises to the membrane. The chain is Putative microRNA 17 host gene protein (MIR17HG) from Homo sapiens (Human).